Consider the following 263-residue polypeptide: ATP synthase subunit a (263 aa).

The propeptide at 1–14 (MYLNNNNNMKYYIN) is removed in mature form. 6 helical membrane-spanning segments follow: residues 35 to 57 (FSFI…ILTM), 95 to 117 (VWGY…NLIS), 129 to 151 (VVFV…FYTH), 156 to 178 (FGLF…IELL), 191 to 213 (LSAN…FNLM), and 228 to 250 (IAIL…VWCI).

It belongs to the ATPase A chain family. F-type ATPases have 2 components, CF(1) - the catalytic core - and CF(0) - the membrane proton channel. In yeast, the dimeric form of ATP synthase consists of 18 polypeptides: alpha, beta, gamma, delta, epsilon, 4 (B), 5 (OSCP), 6 (A), 8, 9 (C), d, E (Tim11), f, g, h, i, j and k.

The protein localises to the mitochondrion inner membrane. In terms of biological role, mitochondrial membrane ATP synthase (F(1)F(0) ATP synthase or Complex V) produces ATP from ADP in the presence of a proton gradient across the membrane which is generated by electron transport complexes of the respiratory chain. F-type ATPases consist of two structural domains, F(1) - containing the extramembraneous catalytic core and F(0) - containing the membrane proton channel, linked together by a central stalk and a peripheral stalk. During catalysis, ATP synthesis in the catalytic domain of F(1) is coupled via a rotary mechanism of the central stalk subunits to proton translocation. Key component of the proton channel; it may play a direct role in the translocation of protons across the membrane. This chain is ATP synthase subunit a (ATP6), found in Eremothecium gossypii (strain ATCC 10895 / CBS 109.51 / FGSC 9923 / NRRL Y-1056) (Yeast).